The following is a 242-amino-acid chain: tRNA uridine(34) hydroxylase (242 aa).

Residues 128-222 (DGREVVMLDT…YFEETGGPGY (95 aa)) form the Rhodanese domain. Cysteine 182 (cysteine persulfide intermediate) is an active-site residue.

It belongs to the TrhO family.

It carries out the reaction uridine(34) in tRNA + AH2 + O2 = 5-hydroxyuridine(34) in tRNA + A + H2O. Catalyzes oxygen-dependent 5-hydroxyuridine (ho5U) modification at position 34 in tRNAs. This chain is tRNA uridine(34) hydroxylase, found in Bordetella avium (strain 197N).